The chain runs to 465 residues: Asparagine--tRNA ligase (465 aa).

The protein belongs to the class-II aminoacyl-tRNA synthetase family. As to quaternary structure, homodimer.

It localises to the cytoplasm. The enzyme catalyses tRNA(Asn) + L-asparagine + ATP = L-asparaginyl-tRNA(Asn) + AMP + diphosphate + H(+). The protein is Asparagine--tRNA ligase of Clostridium perfringens (strain SM101 / Type A).